A 102-amino-acid chain; its full sequence is Putative pterin-4-alpha-carbinolamine dehydratase (102 aa).

The protein belongs to the pterin-4-alpha-carbinolamine dehydratase family.

It catalyses the reaction (4aS,6R)-4a-hydroxy-L-erythro-5,6,7,8-tetrahydrobiopterin = (6R)-L-erythro-6,7-dihydrobiopterin + H2O. The polypeptide is Putative pterin-4-alpha-carbinolamine dehydratase (Burkholderia vietnamiensis (strain G4 / LMG 22486) (Burkholderia cepacia (strain R1808))).